The sequence spans 303 residues: 4-diphosphocytidyl-2-C-methyl-D-erythritol kinase (303 aa).

Residue Lys18 is part of the active site. ATP is bound at residue 111–121 (PVASGIGGGSA). Residue Asp153 is part of the active site.

This sequence belongs to the GHMP kinase family. IspE subfamily.

It carries out the reaction 4-CDP-2-C-methyl-D-erythritol + ATP = 4-CDP-2-C-methyl-D-erythritol 2-phosphate + ADP + H(+). Its pathway is isoprenoid biosynthesis; isopentenyl diphosphate biosynthesis via DXP pathway; isopentenyl diphosphate from 1-deoxy-D-xylulose 5-phosphate: step 3/6. Catalyzes the phosphorylation of the position 2 hydroxy group of 4-diphosphocytidyl-2C-methyl-D-erythritol. The chain is 4-diphosphocytidyl-2-C-methyl-D-erythritol kinase from Sinorhizobium medicae (strain WSM419) (Ensifer medicae).